The following is a 67-amino-acid chain: Conotoxin reg3.8 (67 aa).

The N-terminal stretch at 1–22 (MMSKLGVLLTICLLLFPLSVLP) is a signal peptide. The propeptide occupies 23–50 (LDGDQLADQPARHAQSAERNARFHPVKR). Intrachain disulfides connect C51–C65, C52–C63, and C57–C66. C66 is modified (cysteine amide).

This sequence belongs to the conotoxin M superfamily. Expressed by the venom duct.

Its subcellular location is the secreted. The sequence is that of Conotoxin reg3.8 from Conus regius (Crown cone).